We begin with the raw amino-acid sequence, 842 residues long: Protein translocase subunit SecA (842 aa).

Residues glutamine 85, 103 to 107, and aspartate 493 each bind ATP; that span reads GEGKT. Residues cysteine 825, cysteine 827, cysteine 836, and histidine 837 each contribute to the Zn(2+) site.

Belongs to the SecA family. As to quaternary structure, monomer and homodimer. Part of the essential Sec protein translocation apparatus which comprises SecA, SecYEG and auxiliary proteins SecDF. Other proteins may also be involved. Zn(2+) is required as a cofactor.

Its subcellular location is the cell membrane. It is found in the cytoplasm. The enzyme catalyses ATP + H2O + cellular proteinSide 1 = ADP + phosphate + cellular proteinSide 2.. In terms of biological role, part of the Sec protein translocase complex. Interacts with the SecYEG preprotein conducting channel. Has a central role in coupling the hydrolysis of ATP to the transfer of proteins into and across the cell membrane, serving as an ATP-driven molecular motor driving the stepwise translocation of polypeptide chains across the membrane. The protein is Protein translocase subunit SecA of Streptococcus equi subsp. zooepidemicus (strain H70).